Reading from the N-terminus, the 285-residue chain is MGAPKQKWTSEEEDALRRGVRKHGAGKWRTIQKDPQFSPILSSRSNIDLKDKWRNLSFSASGLGSSKVRVPKITGSSSSPSSSSQALLLPAANNVTEAMLPADADKKPRDGKTPPKYGAMIMEALSELNQPNGSDIDAIFDFIKQRHVVQSTFRRFLPSKLRRLADSNKIEKVDNFYRLPDSFATRTPAQIKVSDPKQKDPSKASKTIGLFAASSPALEAAMAAAVKVTDAEAKAHDAHDQMMEAERMLKMAEDTESILTIAAEIYDRCSRGEITTLVPVAQREF.

Residues 1 to 35 (MGAPKQKWTSEEEDALRRGVRKHGAGKWRTIQKDP) are disordered. Positions 1–60 (MGAPKQKWTSEEEDALRRGVRKHGAGKWRTIQKDPQFSPILSSRSNIDLKDKWRNLSFSA) constitute an HTH myb-type domain. A DNA-binding region (H-T-H motif) is located at residues 28-56 (WRTIQKDPQFSPILSSRSNIDLKDKWRNL). The region spanning 113-181 (TPPKYGAMIM…KVDNFYRLPD (69 aa)) is the H15 domain. The stretch at 226-255 (VKVTDAEAKAHDAHDQMMEAERMLKMAEDT) forms a coiled coil.

It belongs to the histone H1/H5 family. SMH subfamily. Forms a homodimer and heterodimers.

The protein localises to the nucleus. The protein resides in the chromosome. It is found in the nucleolus. It localises to the telomere. Binds preferentially double-stranded telomeric repeats, but may also bind to the single telomeric strand. This Zea mays (Maize) protein is Single myb histone 3 (SMH3).